The chain runs to 310 residues: Phosphoribosylaminoimidazole-succinocarboxamide synthase (310 aa).

Belongs to the SAICAR synthetase family.

The enzyme catalyses 5-amino-1-(5-phospho-D-ribosyl)imidazole-4-carboxylate + L-aspartate + ATP = (2S)-2-[5-amino-1-(5-phospho-beta-D-ribosyl)imidazole-4-carboxamido]succinate + ADP + phosphate + 2 H(+). The protein operates within purine metabolism; IMP biosynthesis via de novo pathway; 5-amino-1-(5-phospho-D-ribosyl)imidazole-4-carboxamide from 5-amino-1-(5-phospho-D-ribosyl)imidazole-4-carboxylate: step 1/2. The protein is Phosphoribosylaminoimidazole-succinocarboxamide synthase of Cytophaga hutchinsonii (strain ATCC 33406 / DSM 1761 / CIP 103989 / NBRC 15051 / NCIMB 9469 / D465).